The chain runs to 261 residues: MRFLILFLALSLGEIDAAPPVQSRIVGGFNCEKNSQPWHVAVFRYNKYICGGVLLNPNWVLTAAHCYGNQYNVWLGKNKLFQHESSAQHRLVSKSFPHPDYNMSLMNDHTPHPEDDYSNDLMLLRLSKPADITDAVKPIDLPTEEPKLGSTCLASGWGSITPTKWQIPNDLQCGFIKPLPNENCAKAYIHKVTDVMLCAGEMGGGKDTCAGDSGGPLICDGVLQGITSWGSIPCAKPNAPAIYTKLIKFTSWIKDTMAKNP.

The signal sequence occupies residues 1–17; the sequence is MRFLILFLALSLGEIDA. A propeptide spans 18–24 (activation peptide); sequence APPVQSR. The 234-residue stretch at 25 to 258 folds into the Peptidase S1 domain; sequence IVGGFNCEKN…FTSWIKDTMA (234 aa). 5 disulfides stabilise this stretch: Cys-31-Cys-173, Cys-50-Cys-66, Cys-152-Cys-219, Cys-184-Cys-198, and Cys-209-Cys-234. His-65 (charge relay system) is an active-site residue. A glycan (N-linked (GlcNAc...) asparagine) is linked at Asn-102. Asp-120 acts as the Charge relay system in catalysis. Ser-213 acts as the Charge relay system in catalysis.

The protein belongs to the peptidase S1 family. Kallikrein subfamily. In terms of tissue distribution, expressed in testis and submaxillary gland. In the testis, expression localized specifically to Leydig cells in the interstitial tissues.

It catalyses the reaction Preferential cleavage of Arg-|-Xaa bonds in small molecule substrates. Highly selective action to release kallidin (lysyl-bradykinin) from kininogen involves hydrolysis of Met-|-Xaa or Leu-|-Xaa.. With respect to regulation, inhibited by protease inhibitors diisopropylfluorophosphate, leupeptin, antipain, benzamidine, phenylmethylsulfonyl fluoride and soybean trypsin inhibitor. In terms of biological role, glandular kallikreins cleave Met-Lys and Arg-Ser bonds in kininogen to release Lys-bradykinin. Displays trypsin-like substrate specificity and shows activity towards casein, gelatin, fibronectin and IGFBP3. The chain is Kallikrein 1-related peptidase b21 (Klk1b21) from Mus musculus (Mouse).